Consider the following 184-residue polypeptide: Large ribosomal subunit protein uL6 (184 aa).

It belongs to the universal ribosomal protein uL6 family. Part of the 50S ribosomal subunit.

Its function is as follows. This protein binds to the 23S rRNA, and is important in its secondary structure. It is located near the subunit interface in the base of the L7/L12 stalk, and near the tRNA binding site of the peptidyltransferase center. This chain is Large ribosomal subunit protein uL6, found in Mycoplasma genitalium (strain ATCC 33530 / DSM 19775 / NCTC 10195 / G37) (Mycoplasmoides genitalium).